A 178-amino-acid polypeptide reads, in one-letter code: Small ribosomal subunit protein uS4 (178 aa).

One can recognise an S4 RNA-binding domain in the interval 104 to 166; the sequence is RRLQTLVYRK…PNSPMALENH (63 aa).

It belongs to the universal ribosomal protein uS4 family. As to quaternary structure, part of the 30S ribosomal subunit. Contacts protein S5. The interaction surface between S4 and S5 is involved in control of translational fidelity.

Functionally, one of the primary rRNA binding proteins, it binds directly to 16S rRNA where it nucleates assembly of the body of the 30S subunit. Its function is as follows. With S5 and S12 plays an important role in translational accuracy. The sequence is that of Small ribosomal subunit protein uS4 from Methanococcus vannielii (strain ATCC 35089 / DSM 1224 / JCM 13029 / OCM 148 / SB).